Here is a 310-residue protein sequence, read N- to C-terminus: Thioredoxin reductase (310 aa).

An FAD-binding site is contributed by 34-41 (NGMQPGGQ). A disulfide bond links cysteine 135 and cysteine 138. 281–290 (DVQDKIYRQA) is a binding site for FAD.

The protein belongs to the class-II pyridine nucleotide-disulfide oxidoreductase family. In terms of assembly, homodimer. FAD serves as cofactor.

Its subcellular location is the cytoplasm. The catalysed reaction is [thioredoxin]-dithiol + NADP(+) = [thioredoxin]-disulfide + NADPH + H(+). The polypeptide is Thioredoxin reductase (trxB) (Rickettsia felis (strain ATCC VR-1525 / URRWXCal2) (Rickettsia azadi)).